The sequence spans 237 residues: MKKQNIPEEILSLITEEEINLFQELQIKIKELNNKTNLTRLTDGDDYWVSQVFDSIWPFKAFTNINFDNKKFLDIGSGCGFPGLAYAITHPNSEIYLIDSLKKKTDAIKILVEQINFKNNIHVINDRVENLAHQSSMRNNFNIATTRAVSNPSTVSEYILPMLKKEGFGVLYCGKWTNQESKNLDKTLEILEGKVKDKKEILLPRNKGTRNIILIQSKNFCPEIYPRKVGKPEKNPL.

Residues G76, F81, 128-129 (VE), and R147 contribute to the S-adenosyl-L-methionine site.

This sequence belongs to the methyltransferase superfamily. RNA methyltransferase RsmG family.

The protein localises to the cytoplasm. In terms of biological role, specifically methylates the N7 position of a guanine in 16S rRNA. This is Ribosomal RNA small subunit methyltransferase G from Prochlorococcus marinus (strain AS9601).